Consider the following 763-residue polypeptide: Photosystem I P700 chlorophyll a apoprotein A1 (763 aa).

Transmembrane regions (helical) follow at residues 72 to 95 (IFSAHFGHLAVIFIWLSGAYFHGA), 158 to 181 (LYVTAIGALVMAGLMLFAGWFHYH), 197 to 221 (LNHHLAGLLGLGSLSWAGHQIHVSL), 305 to 323 (TAHHHLAIAVLFIVAGHMY), 360 to 383 (WHAQLSINLAILGSISIIVAHHMY), 399 to 425 (LSLFTHHIWIGGFLIVGAGAHAAIFMV), 447 to 469 (AIISHLNWVCIWLGFHSFGLYIH), and 544 to 562 (FMVHHIHAFTIHVTALILL). C586 and C595 together coordinate [4Fe-4S] cluster. 2 consecutive transmembrane segments (helical) span residues 602 to 623 (HVFLGLFWMYNSLSIVIFHYSW) and 677 to 699 (TSAYGLLFLGAHFVWAFSLMFLF). H688 contributes to the chlorophyll a' binding site. Chlorophyll a-binding residues include M696 and Y704. W705 is a phylloquinone binding site. Residues 737-757 (AVGVAHYLLGGIVTTWSFFLA) form a helical membrane-spanning segment.

It belongs to the PsaA/PsaB family. The PsaA/B heterodimer binds the P700 chlorophyll special pair and subsequent electron acceptors. PSI consists of a core antenna complex that captures photons, and an electron transfer chain that converts photonic excitation into a charge separation. The cyanobacterial PSI reaction center is composed of one copy each of PsaA,B,C,D,E,F,I,J,K,L,M and X, and forms trimeric complexes. Requires PSI electron transfer chain: 5 chlorophyll a, 1 chlorophyll a', 2 phylloquinones and 3 4Fe-4S clusters. PSI core antenna: 90 chlorophyll a, 22 carotenoids, 3 phospholipids and 1 galactolipid. P700 is a chlorophyll a/chlorophyll a' dimer, A0 is one or more chlorophyll a, A1 is one or both phylloquinones and FX is a shared 4Fe-4S iron-sulfur center. as cofactor.

The protein resides in the cellular thylakoid membrane. It catalyses the reaction reduced [plastocyanin] + hnu + oxidized [2Fe-2S]-[ferredoxin] = oxidized [plastocyanin] + reduced [2Fe-2S]-[ferredoxin]. PsaA and PsaB bind P700, the primary electron donor of photosystem I (PSI), as well as the electron acceptors A0, A1 and FX. PSI is a plastocyanin/cytochrome c6-ferredoxin oxidoreductase, converting photonic excitation into a charge separation, which transfers an electron from the donor P700 chlorophyll pair to the spectroscopically characterized acceptors A0, A1, FX, FA and FB in turn. Oxidized P700 is reduced on the lumenal side of the thylakoid membrane by plastocyanin or cytochrome c6. In Synechococcus elongatus (strain ATCC 33912 / PCC 7942 / FACHB-805) (Anacystis nidulans R2), this protein is Photosystem I P700 chlorophyll a apoprotein A1.